The chain runs to 270 residues: Glutamate 5-kinase (270 aa).

Lys-18 lines the ATP pocket. Residues Ser-54, Asp-141, and Asn-153 each coordinate substrate. 173-174 (SD) is a binding site for ATP.

This sequence belongs to the glutamate 5-kinase family.

The protein localises to the cytoplasm. It catalyses the reaction L-glutamate + ATP = L-glutamyl 5-phosphate + ADP. The protein operates within amino-acid biosynthesis; L-proline biosynthesis; L-glutamate 5-semialdehyde from L-glutamate: step 1/2. Functionally, catalyzes the transfer of a phosphate group to glutamate to form L-glutamate 5-phosphate. The polypeptide is Glutamate 5-kinase (Leifsonia xyli subsp. xyli (strain CTCB07)).